Here is a 323-residue protein sequence, read N- to C-terminus: Small ribosomal subunit protein uS2 (323 aa).

Residues 295–323 form a disordered region; it reads VVNRDRAGFNKKQPKAEEAAKPAEKKAEK.

Belongs to the universal ribosomal protein uS2 family.

This Mycoplasmoides gallisepticum (strain R(low / passage 15 / clone 2)) (Mycoplasma gallisepticum) protein is Small ribosomal subunit protein uS2.